The primary structure comprises 510 residues: GMP synthase [glutamine-hydrolyzing] (510 aa).

In terms of domain architecture, Glutamine amidotransferase type-1 spans 5–195; that stretch reads LVLVVDFGGQ…LFNVCNLKGD (191 aa). Cysteine 82 functions as the Nucleophile in the catalytic mechanism. Residues histidine 169 and glutamate 171 contribute to the active site. A GMPS ATP-PPase domain is found at 196–385; the sequence is WSMSSFAEQQ…LGIPHKLVWR (190 aa). 223–229 contributes to the ATP binding site; it reads SGGVDSS.

In terms of assembly, homodimer.

It catalyses the reaction XMP + L-glutamine + ATP + H2O = GMP + L-glutamate + AMP + diphosphate + 2 H(+). The protein operates within purine metabolism; GMP biosynthesis; GMP from XMP (L-Gln route): step 1/1. Its function is as follows. Catalyzes the synthesis of GMP from XMP. This is GMP synthase [glutamine-hydrolyzing] from Clostridium botulinum (strain Loch Maree / Type A3).